A 330-amino-acid polypeptide reads, in one-letter code: MGTFTLHQGQSNLIKSFFRNYYLNAELGLPNDMELREFALQPFGSDTYIRHLSFSSSEELRDYLVNRNLPLHLFYSSARYQLPAARDMEEKAWMGSDLLFDIDADHICKLRSIRFCPVCGNAITSEKCERDNVETLEYVEMTSECIKRGLEEARNLVEILEDDFGLKPKVYFSGNRGFHVQVDCYGDCALLDSDERKEIAEYVMGVGVPSYPGGGENAPGWVGRKNRGINGVTIDGQVTIDVKRLIRIPNSLHGKSGLIVKEVTNLDDFEFNEALSPFTGYTIFLPYISIETEVLSRNIKLNRGVPIKIESSIGIYLHLKNLGEVKAYVR.

Catalysis depends on residues Asp-101 and Asp-103. Positions 116, 119, 128, and 131 each coordinate Zn(2+). The active site involves Asp-235.

It belongs to the eukaryotic-type primase small subunit family. Heterodimer of a small subunit (PriS) and a large subunit (PriL). The cofactor is Mg(2+). It depends on Mn(2+) as a cofactor.

Catalytic subunit of DNA primase, an RNA polymerase that catalyzes the synthesis of short RNA molecules used as primers for DNA polymerase during DNA replication. The small subunit contains the primase catalytic core and has DNA synthesis activity on its own. Binding to the large subunit stabilizes and modulates the activity, increasing the rate of DNA synthesis while decreasing the length of the DNA fragments, and conferring RNA synthesis capability. The DNA polymerase activity may enable DNA primase to also catalyze primer extension after primer synthesis. May also play a role in DNA repair. The sequence is that of DNA primase small subunit PriS from Saccharolobus islandicus (strain M.16.27) (Sulfolobus islandicus).